The following is a 467-amino-acid chain: Trigger factor (467 aa).

Residues 162 to 243 (GDFVSIDLSA…LNSVKERHLP (82 aa)) enclose the PPIase FKBP-type domain. The span at 426–435 (EEGNELDLDE) shows a compositional bias: acidic residues. The tract at residues 426–467 (EEGNELDLDELFGTQAGEEQGEQAEGTEATDEQSAKADAKAE) is disordered. Residues 436–452 (LFGTQAGEEQGEQAEGT) show a composition bias toward low complexity. Residues 458 to 467 (QSAKADAKAE) are compositionally biased toward basic and acidic residues.

This sequence belongs to the FKBP-type PPIase family. Tig subfamily.

The protein localises to the cytoplasm. It carries out the reaction [protein]-peptidylproline (omega=180) = [protein]-peptidylproline (omega=0). In terms of biological role, involved in protein export. Acts as a chaperone by maintaining the newly synthesized protein in an open conformation. Functions as a peptidyl-prolyl cis-trans isomerase. The sequence is that of Trigger factor from Saccharopolyspora erythraea (strain ATCC 11635 / DSM 40517 / JCM 4748 / NBRC 13426 / NCIMB 8594 / NRRL 2338).